Consider the following 264-residue polypeptide: MKAVVLAVALVFLTGSQAWHVWQQDEPQSQWDKVKDFANVYVDAVKDSGRDYVSQFESSSLGQQLNLNLLENWDTLGSTVSQLQERLGPLTRDFWDNLEKETDWVRQEMNKDLEEVKQKVQPYLDEFQKKWKEDVELYRQKVAPLGAELQESARQKLQELQGRLSPVAEEFRDRMRTHVDSLRTQLAPHSEQMRESLAQRLAELKSNPTLNEYHTRAKTHLKTLGEKARPALEDLRHSLMPMLETLKTQVQSVIDKASETLTAQ.

A signal peptide spans 1 to 18; sequence MKAVVLAVALVFLTGSQA. 2 repeat units span residues 67-88 and 89-110. Residues 67 to 264 are 10 X approximate tandem repeats; it reads LNLLENWDTL…DKASETLTAQ (198 aa). M109 carries the methionine sulfoxide modification. One copy of the 3; half-length repeat lies at 111–121; that stretch reads KDLEEVKQKVQ. Tandem repeats lie at residues 122-143, 144-165, and 166-187. A 7; truncated repeat occupies 188 to 207; it reads PHSEQMRESLAQRLAELKSN. A Methionine sulfoxide modification is found at M193. Repeat 8 spans residues 208 to 229; the sequence is PTLNEYHTRAKTHLKTLGEKAR. The stretch at 230-240 is one 9; half-length repeat; it reads PALEDLRHSLM. Methionine sulfoxide occurs at positions 240 and 242. Residues 241–264 form repeat 10; the sequence is PMLETLKTQVQSVIDKASETLTAQ.

The protein belongs to the apolipoprotein A1/A4/E family. As to quaternary structure, homodimer. Interacts with APOA1BP and CLU. Component of a sperm activating protein complex (SPAP), consisting of APOA1, an immunoglobulin heavy chain, an immunoglobulin light chain and albumin. Interacts with NDRG1. Interacts with SCGB3A2. Interacts with NAXE and YJEFN3. Post-translationally, glycosylated. In terms of processing, palmitoylated. May be acylated. Post-translationally, phosphorylation sites are present in the extracellular medium. Major protein of plasma HDL, also found in chylomicrons.

Its subcellular location is the secreted. Participates in the reverse transport of cholesterol from tissues to the liver for excretion by promoting cholesterol efflux from tissues and by acting as a cofactor for the lecithin cholesterol acyltransferase (LCAT). As part of the SPAP complex, activates spermatozoa motility. The polypeptide is Apolipoprotein A-I (Apoa1) (Mus musculus (Mouse)).